A 203-amino-acid polypeptide reads, in one-letter code: High frequency lysogenization protein HflD homolog (203 aa).

This sequence belongs to the HflD family.

It is found in the cytoplasm. It localises to the cell inner membrane. This is High frequency lysogenization protein HflD homolog from Dichelobacter nodosus (strain VCS1703A).